The sequence spans 341 residues: Methionine import ATP-binding protein MetN 1 (341 aa).

The region spanning 2 to 241 is the ABC transporter domain; the sequence is IKLNQIVKRY…PQHEVTKRFV (240 aa). 38–45 is a binding site for ATP; that stretch reads GFSGAGKS.

The protein belongs to the ABC transporter superfamily. Methionine importer (TC 3.A.1.24) family. The complex is composed of two ATP-binding proteins (MetN), two transmembrane proteins (MetI) and a solute-binding protein (MetQ).

The protein resides in the cell membrane. It carries out the reaction L-methionine(out) + ATP + H2O = L-methionine(in) + ADP + phosphate + H(+). The enzyme catalyses D-methionine(out) + ATP + H2O = D-methionine(in) + ADP + phosphate + H(+). Part of the ABC transporter complex MetNIQ involved in methionine import. Responsible for energy coupling to the transport system. This is Methionine import ATP-binding protein MetN 1 from Staphylococcus epidermidis (strain ATCC 12228 / FDA PCI 1200).